The chain runs to 429 residues: C4-dicarboxylate transport protein (429 aa).

8 helical membrane-spanning segments follow: residues 3-23 (VSIF…GVLL), 44-64 (LIKM…IAGM), 76-96 (IALL…LVVV), 144-164 (AFAS…GFAL), 184-204 (VIFG…FGAM), 222-242 (LILC…GTIA), 331-351 (TLLV…GSGF), and 352-372 (IVLA…LALI).

The protein belongs to the dicarboxylate/amino acid:cation symporter (DAACS) (TC 2.A.23) family.

The protein localises to the cell inner membrane. Functionally, responsible for the transport of dicarboxylates such as succinate, fumarate, and malate from the periplasm across the membrane. The chain is C4-dicarboxylate transport protein from Yersinia pseudotuberculosis serotype O:1b (strain IP 31758).